The following is a 125-amino-acid chain: Small ribosomal subunit protein uS12 (125 aa).

The interval 1 to 31 (MPTINQLVRHGRQTEVTKSKSPAMQGGPQRR) is disordered. 3-methylthioaspartic acid is present on Asp89. Residues 105–125 (QGVKDRKQSRSKYGAKRPKKA) are disordered. Basic residues predominate over residues 113-125 (SRSKYGAKRPKKA).

This sequence belongs to the universal ribosomal protein uS12 family. Part of the 30S ribosomal subunit. Contacts proteins S8 and S17. May interact with IF1 in the 30S initiation complex.

Functionally, with S4 and S5 plays an important role in translational accuracy. Its function is as follows. Interacts with and stabilizes bases of the 16S rRNA that are involved in tRNA selection in the A site and with the mRNA backbone. Located at the interface of the 30S and 50S subunits, it traverses the body of the 30S subunit contacting proteins on the other side and probably holding the rRNA structure together. The combined cluster of proteins S8, S12 and S17 appears to hold together the shoulder and platform of the 30S subunit. This is Small ribosomal subunit protein uS12 from Methylibium petroleiphilum (strain ATCC BAA-1232 / LMG 22953 / PM1).